Here is a 155-residue protein sequence, read N- to C-terminus: DNA polymerase epsilon subunit 4 (155 aa).

2 stretches are compositionally biased toward acidic residues: residues 1 to 16 (MASE…EEQD) and 24 to 48 (ETEE…DNPE). A disordered region spans residues 1-76 (MASEELFEAE…APADNEAKMT (76 aa)). Polar residues predominate over residues 49–65 (AESTTEQLTEKPVTNGN).

Component of the DNA polymerase epsilon complex consisting of four subunits: the catalytic subunit PolE1/DNApol-epsilon255 and the accessory subunits PolE2/DNApol-epsilon58, Chrac-14/DNApolE3 and PolE4/Mes4.

The protein resides in the nucleus. Functionally, accessory component of the DNA polymerase epsilon complex. Participates in DNA repair and in chromosomal DNA replication. Has a role in cell cycle progression. Required for wing morphogenesis. The polypeptide is DNA polymerase epsilon subunit 4 (Drosophila melanogaster (Fruit fly)).